The chain runs to 160 residues: Cell cycle regulator of non-homologous end joining (160 aa).

At Met-1 the chain carries N-acetylmethionine. The short motif at 1–21 (METLKSDNKKRVLPSWMTAPG) is the KBM element. Positions 78-152 (KPWEQPSLVA…EGKEEEDELK (75 aa)) are disordered. Over residues 99–109 (ESPHTSSPGSS) the composition is skewed to low complexity. An XLM motif is present at residues 150-160 (ELKYVREIFFS).

In terms of assembly, interacts (via KBM motif) with XRCC5/Ku80 and XRCC6/Ku70 heterodimer. Interacts (via XLF motif) with TRIM28/KAP1, ATM, MRE11, NBN and RAD50. Interacts with splicing factor SF3B1. Interacts with ERCC6L2; this interaction is DNA independent.

The protein resides in the cytoplasm. The protein localises to the nucleus. It is found in the chromosome. Its function is as follows. Cell-cycle-specific regulator of classical non-homologous end joining (NHEJ) of DNA double-strand break (DSB) repair, which can act both as an activator or inhibitor of NHEJ, depending on the cell cycle phase. Acts as a regulator of DNA repair pathway choice by specifically inhibiting classical NHEJ during the S and G2 phases, thereby promoting error-free repair by homologous recombination during cell cycle phases when sister chromatids are present. Preferentially protects single-stranded overhangs at break sites by inhibiting classical NHEJ, thereby creating a local environment that favors homologous recombination. Acts via interaction with XRCC5/Ku80 and XRCC6/Ku70. In contrast, acts as an activator of NHEJ during G1 phase of the cell cycle: promotes classical NHEJ in G1 phase cells via multivalent interactions that increase the affinity of DNA damage response proteins for DSB-associated chromatin. Also involved in immunoglobulin V(D)J recombination. May also act as an indirect regulator of proteasome. In Rattus norvegicus (Rat), this protein is Cell cycle regulator of non-homologous end joining.